An 89-amino-acid polypeptide reads, in one-letter code: MKGLAAALLVLVCTMALCSCAQVGTNKELCCLVYTSWQIPQKFIVDYSETSPQCPKPGVILLTKRGRQICADPNKKWVQKYISDLKLNA.

The N-terminal stretch at Met1–Cys20 is a signal peptide. Intrachain disulfides connect Cys30/Cys54 and Cys31/Cys70.

This sequence belongs to the intercrine beta (chemokine CC) family. The Cys-30/Cys-54 disulfide bond is required for activity. Expressed at high levels in lung, lymph nodes, placenta, bone marrow, dendritic cells present in germinal centers and T-cell areas of secondary lymphoid organs and macrophages derived from peripheral blood monocytes. Not expressed by peripheral blood monocytes and a monocyte-to-macrophage differentiation is a prerequisite for expression. Expressed in synovial fluids from patients with rheumatoid and septic arthritis and in ovarian carcinoma ascitic fluid.

Its subcellular location is the secreted. Chemotactic factor that attracts lymphocytes but not monocytes or granulocytes. May be involved in B-cell migration into B-cell follicles in lymph nodes. Attracts naive T-lymphocytes toward dendritic cells and activated macrophages in lymph nodes, has chemotactic activity for naive T-cells, CD4+ and CD8+ T-cells and thus may play a role in both humoral and cell-mediated immunity responses. This Homo sapiens (Human) protein is C-C motif chemokine 18 (CCL18).